A 103-amino-acid polypeptide reads, in one-letter code: Pseudonajatoxin b homolog (103 aa).

The first 21 residues, 1-21 (MKTLLLTLVVVTIVCLDLGYT), serve as a signal peptide directing secretion. 5 cysteine pairs are disulfide-bonded: cysteine 24-cysteine 42, cysteine 35-cysteine 63, cysteine 48-cysteine 52, cysteine 67-cysteine 79, and cysteine 80-cysteine 85.

The protein belongs to the three-finger toxin family. Long-chain subfamily. Type II alpha-neurotoxin sub-subfamily. As to expression, expressed by the venom gland.

Its subcellular location is the secreted. Functionally, binds with high affinity to muscular (alpha-1/CHRNA1) and neuronal (alpha-7/CHRNA7) nicotinic acetylcholine receptor (nAChR) and inhibits acetylcholine from binding to the receptor, thereby impairing neuromuscular and neuronal transmission. This chain is Pseudonajatoxin b homolog, found in Pseudonaja textilis (Eastern brown snake).